The chain runs to 349 residues: PDZ and LIM domain protein 2 (349 aa).

Positions 1-84 (MALTVNVVGP…PLRLQLDRSQ (84 aa)) constitute a PDZ domain. Disordered stretches follow at residues 72 to 95 (SASP…NGEG) and 108 to 147 (LRTH…PIAL). Composition is skewed to polar residues over residues 81–90 (DRSQTASPGQ) and 108–121 (LRTH…QRSA). A phosphoserine mark is found at S124, S127, S129, S134, and S137. 2 positions are modified to phosphothreonine: T138 and T142. Residues S143 and S163 each carry the phosphoserine modification. Disordered regions lie at residues 168-212 (ATHH…SSLD) and 250-272 (ERGG…PTSR). Residues 176–192 (GQPTSQQAGHSSPSDST) are compositionally biased toward polar residues. Residues S199, S204, S205, S209, S210, and S263 each carry the phosphoserine modification. Low complexity predominate over residues 199–211 (SPGRPSSPRLSSL). The span at 260-270 (SSLSPKASLPT) shows a compositional bias: polar residues. Residues 281–341 (HTCEKCSVNI…EKHARQRYSM (61 aa)) form the LIM zinc-binding domain.

In terms of assembly, interacts with alpha-actinins ACTN1 and ACTN4, FLNA and MYH9. Interacts (via LIM zinc-binding domain) with MKRN2. As to expression, highly expressed in cornea and lung. Expressed at intermediate level in sclera and combined tissues of the eye irido-corneal angle. Specifically expressed in the corneal epithelial cells but not in other corneal layers.

The protein resides in the cytoplasm. It is found in the cytoskeleton. Functionally, probable adapter protein located at the actin cytoskeleton that promotes cell attachment. Necessary for the migratory capacity of epithelial cells. Overexpression enhances cell adhesion to collagen and fibronectin and suppresses anchorage independent growth. May contribute to tumor cell migratory capacity. This is PDZ and LIM domain protein 2 (Pdlim2) from Rattus norvegicus (Rat).